The sequence spans 970 residues: MASVLLPLPQVFVLFDYRRSRKESSFPRAVYNSNSISSNSTNANHFLRRISNFCETGDLDKSFRTVQEFVGDDESSSDAFLLVREALGLLLQASGKRKDIEMGRKIHQLVSGSTRLRNDDVLCTRIITMYAMCGSPDDSRFVFDALRSKNLFQWNAVISSYSRNELYDEVLETFIEMISTTDLLPDHFTYPCVIKACAGMSDVGIGLAVHGLVVKTGLVEDVFVGNALVSFYGTHGFVTDALQLFDIMPERNLVSWNSMIRVFSDNGFSEESFLLLGEMMEENGDGAFMPDVATLVTVLPVCAREREIGLGKGVHGWAVKLRLDKELVLNNALMDMYSKCGCITNAQMIFKMNNNKNVVSWNTMVGGFSAEGDTHGTFDVLRQMLAGGEDVKADEVTILNAVPVCFHESFLPSLKELHCYSLKQEFVYNELVANAFVASYAKCGSLSYAQRVFHGIRSKTVNSWNALIGGHAQSNDPRLSLDAHLQMKISGLLPDSFTVCSLLSACSKLKSLRLGKEVHGFIIRNWLERDLFVYLSVLSLYIHCGELCTVQALFDAMEDKSLVSWNTVITGYLQNGFPDRALGVFRQMVLYGIQLCGISMMPVFGACSLLPSLRLGREAHAYALKHLLEDDAFIACSLIDMYAKNGSITQSSKVFNGLKEKSTASWNAMIMGYGIHGLAKEAIKLFEEMQRTGHNPDDLTFLGVLTACNHSGLIHEGLRYLDQMKSSFGLKPNLKHYACVIDMLGRAGQLDKALRVVAEEMSEEADVGIWKSLLSSCRIHQNLEMGEKVAAKLFELEPEKPENYVLLSNLYAGLGKWEDVRKVRQRMNEMSLRKDAGCSWIELNRKVFSFVVGERFLDGFEEIKSLWSILEMKISKMGYRPDTMSVQHDLSEEEKIEQLRGHSEKLALTYGLIKTSEGTTIRVYKNLRICVDCHNAAKLISKVMEREIVVRDNKRFHHFKNGVCSCGDYW.

19 PPR repeats span residues 119 to 149 (DDVLCTRIITMYAMCGSPDDSRFVFDALRSK), 150 to 185 (NLFQWNAVISSYSRNELYDEVLETFIEMISTTDLLP), 186 to 220 (DHFTYPCVIKACAGMSDVGIGLAVHGLVVKTGLVE), 221 to 251 (DVFVGNALVSFYGTHGFVTDALQLFDIMPER), 252 to 282 (NLVSWNSMIRVFSDNGFSEESFLLLGEMMEE), 291 to 325 (DVATLVTVLPVCAREREIGLGKGVHGWAVKLRLDK), 326 to 356 (ELVLNNALMDMYSKCGCITNAQMIFKMNNNK), 357 to 391 (NVVSWNTMVGGFSAEGDTHGTFDVLRQMLAGGEDV), 394 to 428 (DEVTILNAVPVCFHESFLPSLKELHCYSLKQEFVY), 429 to 459 (NELVANAFVASYAKCGSLSYAQRVFHGIRSK), 460 to 494 (TVNSWNALIGGHAQSNDPRLSLDAHLQMKISGLLP), 495 to 529 (DSFTVCSLLSACSKLKSLRLGKEVHGFIIRNWLER), 530 to 560 (DLFVYLSVLSLYIHCGELCTVQALFDAMEDK), 561 to 595 (SLVSWNTVITGYLQNGFPDRALGVFRQMVLYGIQL), 597 to 630 (GISMMPVFGACSLLPSLRLGREAHAYALKHLLED), 631 to 661 (DAFIACSLIDMYAKNGSITQSSKVFNGLKEK), 662 to 696 (STASWNAMIMGYGIHGLAKEAIKLFEEMQRTGHNP), 697 to 727 (DDLTFLGVLTACNHSGLIHEGLRYLDQMKSS), and 733 to 764 (NLKHYACVIDMLGRAGQLDKALRVVAEEMSEE). Residues 770-845 (WKSLLSSCRI…AGCSWIELNR (76 aa)) form a type E motif region. The type E(+) motif stretch occupies residues 846–875 (KVFSFVVGERFLDGFEEIKSLWSILEMKIS). Residues 876–970 (KMGYRPDTMS…NGVCSCGDYW (95 aa)) are type DYW motif.

It belongs to the PPR family. PCMP-H subfamily.

The polypeptide is Pentatricopeptide repeat-containing protein At1g18485 (PCMP-H8) (Arabidopsis thaliana (Mouse-ear cress)).